Here is a 364-residue protein sequence, read N- to C-terminus: Mannonate dehydratase (364 aa).

Belongs to the mannonate dehydratase family. It depends on Fe(2+) as a cofactor. Requires Mn(2+) as cofactor.

It carries out the reaction D-mannonate = 2-dehydro-3-deoxy-D-gluconate + H2O. The protein operates within carbohydrate metabolism; pentose and glucuronate interconversion. Functionally, catalyzes the dehydration of D-mannonate. This Streptococcus equi subsp. zooepidemicus (strain MGCS10565) protein is Mannonate dehydratase.